We begin with the raw amino-acid sequence, 71 residues long: Small ribosomal subunit protein bS21 (71 aa).

The protein belongs to the bacterial ribosomal protein bS21 family.

The chain is Small ribosomal subunit protein bS21 from Nitrosococcus oceani (strain ATCC 19707 / BCRC 17464 / JCM 30415 / NCIMB 11848 / C-107).